A 227-amino-acid chain; its full sequence is GTP:AMP phosphotransferase AK3, mitochondrial (227 aa).

The GTP site is built by Gly17, Gly19, Lys20, Gly21, and Thr22. Residue Lys20 is modified to N6-succinyllysine. Lys29 carries the post-translational modification N6-acetyllysine; alternate. Lys29 carries the N6-succinyllysine; alternate modification. Lys34 is subject to N6-acetyllysine. At Ser37 the chain carries Phosphoserine. Residues 37–66 are NMP; sequence SSGDLLRQNMLQGTEIAVLAKSFIDQGKLI. Ser38 and Arg43 together coordinate AMP. The residue at position 57 (Lys57) is an N6-succinyllysine. N6-acetyllysine; alternate is present on residues Lys64 and Lys80. Residues Lys64 and Lys80 each carry the N6-succinyllysine; alternate modification. An AMP-binding site is contributed by Lys64. The AMP site is built by Gly91, Arg94, and Gln98. The LID stretch occupies residues 127–164; that stretch reads ARWIHPASGRVYNIEFNPPKTVGIDDLTGEPLIQREDD. GTP is bound by residues Arg128, Tyr138, Asn139, Arg161, and Arg172. 2 positions are modified to N6-acetyllysine; alternate: Lys174 and Lys189. 2 positions are modified to N6-succinyllysine; alternate: Lys174 and Lys189. A GTP-binding site is contributed by Thr201. Lys203 carries the N6-acetyllysine modification.

This sequence belongs to the adenylate kinase family. AK3 subfamily. Monomer.

It localises to the mitochondrion matrix. The catalysed reaction is a ribonucleoside 5'-triphosphate + AMP = a ribonucleoside 5'-diphosphate + ADP. It carries out the reaction GTP + AMP = GDP + ADP. It catalyses the reaction ITP + AMP = IDP + ADP. Its function is as follows. Mitochondrial adenylate kinase with a specific GTP:AMP phosphotransferase activity. Could also use ITP as phosphate donor. Its physiological function is to recycle GTP into GDP which is necessary for the TCA cycle in the mitochondrial matrix. In Rattus norvegicus (Rat), this protein is GTP:AMP phosphotransferase AK3, mitochondrial.